The sequence spans 338 residues: Ketol-acid reductoisomerase (NADP(+)) (338 aa).

The KARI N-terminal Rossmann domain maps to 1-181; sequence MKVFYDKDAD…GGGRAGIIET (181 aa). Residues 24-27, arginine 47, and serine 52 each bind NADP(+); that span reads YGSQ. Histidine 107 is an active-site residue. Position 133 (glycine 133) interacts with NADP(+). The KARI C-terminal knotted domain occupies 182–327; the sequence is NFREETETDL…AKLRAMMPWI (146 aa). Mg(2+)-binding residues include aspartate 190, glutamate 194, glutamate 226, and glutamate 230. Serine 251 provides a ligand contact to substrate.

Belongs to the ketol-acid reductoisomerase family. Mg(2+) is required as a cofactor.

The catalysed reaction is (2R)-2,3-dihydroxy-3-methylbutanoate + NADP(+) = (2S)-2-acetolactate + NADPH + H(+). It carries out the reaction (2R,3R)-2,3-dihydroxy-3-methylpentanoate + NADP(+) = (S)-2-ethyl-2-hydroxy-3-oxobutanoate + NADPH + H(+). Its pathway is amino-acid biosynthesis; L-isoleucine biosynthesis; L-isoleucine from 2-oxobutanoate: step 2/4. The protein operates within amino-acid biosynthesis; L-valine biosynthesis; L-valine from pyruvate: step 2/4. Its function is as follows. Involved in the biosynthesis of branched-chain amino acids (BCAA). Catalyzes an alkyl-migration followed by a ketol-acid reduction of (S)-2-acetolactate (S2AL) to yield (R)-2,3-dihydroxy-isovalerate. In the isomerase reaction, S2AL is rearranged via a Mg-dependent methyl migration to produce 3-hydroxy-3-methyl-2-ketobutyrate (HMKB). In the reductase reaction, this 2-ketoacid undergoes a metal-dependent reduction by NADPH to yield (R)-2,3-dihydroxy-isovalerate. The chain is Ketol-acid reductoisomerase (NADP(+)) from Cupriavidus necator (strain ATCC 17699 / DSM 428 / KCTC 22496 / NCIMB 10442 / H16 / Stanier 337) (Ralstonia eutropha).